We begin with the raw amino-acid sequence, 83 residues long: Cytochrome b559 subunit alpha (83 aa).

The helical transmembrane segment at 21 to 35 (VIHSITIPSLFIAGW) threads the bilayer. Residue His23 coordinates heme.

It belongs to the PsbE/PsbF family. As to quaternary structure, heterodimer of an alpha subunit and a beta subunit. PSII is composed of 1 copy each of membrane proteins PsbA, PsbB, PsbC, PsbD, PsbE, PsbF, PsbH, PsbI, PsbJ, PsbK, PsbL, PsbM, PsbT, PsbX, PsbY, PsbZ, Psb30/Ycf12, at least 3 peripheral proteins of the oxygen-evolving complex and a large number of cofactors. It forms dimeric complexes. Heme b serves as cofactor.

Its subcellular location is the plastid. It is found in the chloroplast thylakoid membrane. This b-type cytochrome is tightly associated with the reaction center of photosystem II (PSII). PSII is a light-driven water:plastoquinone oxidoreductase that uses light energy to abstract electrons from H(2)O, generating O(2) and a proton gradient subsequently used for ATP formation. It consists of a core antenna complex that captures photons, and an electron transfer chain that converts photonic excitation into a charge separation. In Amborella trichopoda, this protein is Cytochrome b559 subunit alpha.